The following is a 273-amino-acid chain: tRNA (guanine-N(7)-)-methyltransferase (273 aa).

The S-adenosyl-L-methionine site is built by G86, E109, R111, N142, A143, and L162. D165 is an active-site residue. The interval 166-174 is alphaC helix; it reads PHFKKTKHK. S-adenosyl-L-methionine contacts are provided by T240 and E242. The segment at 240 to 248 is alpha6 helix; it reads TEEGKKVQR.

The protein belongs to the class I-like SAM-binding methyltransferase superfamily. TrmB family. As to quaternary structure, catalytic component of the METTL1-WDR4 complex, composed of mettl1 and wdr4.

Its subcellular location is the nucleus. The catalysed reaction is guanosine(46) in tRNA + S-adenosyl-L-methionine = N(7)-methylguanosine(46) in tRNA + S-adenosyl-L-homocysteine. It carries out the reaction a guanosine in mRNA + S-adenosyl-L-methionine = an N(7)-methylguanosine in mRNA + S-adenosyl-L-homocysteine. It catalyses the reaction a guanosine in miRNA + S-adenosyl-L-methionine = an N(7)-methylguanosine in miRNA + S-adenosyl-L-homocysteine. The protein operates within tRNA modification; N(7)-methylguanine-tRNA biosynthesis. In terms of biological role, catalytic component of METTL1-WDR4 methyltransferase complex that mediates the formation of N(7)-methylguanine in a subset of RNA species, such as tRNAs, mRNAs and microRNAs (miRNAs). Catalyzes the formation of N(7)-methylguanine at position 46 (m7G46) in a large subset of tRNAs that contain the 5'-RAGGU-3' motif within the variable loop. M7G46 interacts with C13-G22 in the D-loop to stabilize tRNA tertiary structure and protect tRNAs from decay. Also acts as a methyltransferase for a subset of internal N(7)-methylguanine in mRNAs. Internal N(7)-methylguanine methylation of mRNAs in response to stress promotes their relocalization to stress granules, thereby suppressing their translation. Also methylates a specific subset of miRNAs. The sequence is that of tRNA (guanine-N(7)-)-methyltransferase (mettl1) from Xenopus laevis (African clawed frog).